The primary structure comprises 108 residues: UPF0060 membrane protein Msil_1658 (108 aa).

Helical transmembrane passes span 5 to 25, 31 to 51, 62 to 82, and 88 to 108; these read LVYVAAALAEIAGCFSFWAWL, SLWLIPGTASLLLFAWLLTLI, AYGGVYVTVSLLWLWAMEGVW, and LGGATLCLIGAAIIILAPRPA.

It belongs to the UPF0060 family.

The protein localises to the cell inner membrane. The sequence is that of UPF0060 membrane protein Msil_1658 from Methylocella silvestris (strain DSM 15510 / CIP 108128 / LMG 27833 / NCIMB 13906 / BL2).